The sequence spans 100 residues: Integration host factor subunit alpha (100 aa).

The protein belongs to the bacterial histone-like protein family. As to quaternary structure, heterodimer of an alpha and a beta chain.

In terms of biological role, this protein is one of the two subunits of integration host factor, a specific DNA-binding protein that functions in genetic recombination as well as in transcriptional and translational control. In Ectopseudomonas mendocina (strain ymp) (Pseudomonas mendocina), this protein is Integration host factor subunit alpha.